We begin with the raw amino-acid sequence, 336 residues long: Lipoyl synthase (336 aa).

Positions 81, 86, 92, 107, 111, 114, and 323 each coordinate [4Fe-4S] cluster. The Radical SAM core domain maps to 93–312 (FGHGTATFMI…EDYGYELGFS (220 aa)).

The protein belongs to the radical SAM superfamily. Lipoyl synthase family. [4Fe-4S] cluster serves as cofactor.

Its subcellular location is the cytoplasm. The enzyme catalyses [[Fe-S] cluster scaffold protein carrying a second [4Fe-4S](2+) cluster] + N(6)-octanoyl-L-lysyl-[protein] + 2 oxidized [2Fe-2S]-[ferredoxin] + 2 S-adenosyl-L-methionine + 4 H(+) = [[Fe-S] cluster scaffold protein] + N(6)-[(R)-dihydrolipoyl]-L-lysyl-[protein] + 4 Fe(3+) + 2 hydrogen sulfide + 2 5'-deoxyadenosine + 2 L-methionine + 2 reduced [2Fe-2S]-[ferredoxin]. It functions in the pathway protein modification; protein lipoylation via endogenous pathway; protein N(6)-(lipoyl)lysine from octanoyl-[acyl-carrier-protein]: step 2/2. Its function is as follows. Catalyzes the radical-mediated insertion of two sulfur atoms into the C-6 and C-8 positions of the octanoyl moiety bound to the lipoyl domains of lipoate-dependent enzymes, thereby converting the octanoylated domains into lipoylated derivatives. The sequence is that of Lipoyl synthase from Stenotrophomonas maltophilia (strain K279a).